We begin with the raw amino-acid sequence, 229 residues long: Large ribosomal subunit protein uL1 (229 aa).

This sequence belongs to the universal ribosomal protein uL1 family. Part of the 50S ribosomal subunit.

Functionally, binds directly to 23S rRNA. The L1 stalk is quite mobile in the ribosome, and is involved in E site tRNA release. In terms of biological role, protein L1 is also a translational repressor protein, it controls the translation of the L11 operon by binding to its mRNA. This Rhodopseudomonas palustris (strain TIE-1) protein is Large ribosomal subunit protein uL1.